A 201-amino-acid polypeptide reads, in one-letter code: E3 ubiquitin-protein ligase LAP (201 aa).

The Cytoplasmic segment spans residues methionine 1–asparagine 92. The RING-CH-type zinc-finger motif lies at aspartate 9–lysine 69. The Zn(2+) site is built by cysteine 17, cysteine 20, cysteine 31, cysteine 33, histidine 41, cysteine 44, cysteine 59, and cysteine 62. A helical membrane pass occupies residues leucine 93–isoleucine 113. Residues lysine 114 to glutamate 123 lie on the Lumenal side of the membrane. The helical transmembrane segment at leucine 124–alanine 144 threads the bilayer. At leucine 145–asparagine 201 the chain is on the cytoplasmic side. Positions glutamine 168–tyrosine 188 are disordered. Over residues glutamate 169–tyrosine 188 the composition is skewed to acidic residues.

It belongs to the poxviridae LAP protein family.

The protein localises to the host membrane. It localises to the host Golgi apparatus. The protein resides in the host trans-Golgi network membrane. It is found in the host early endosome membrane. It carries out the reaction S-ubiquitinyl-[E2 ubiquitin-conjugating enzyme]-L-cysteine + [acceptor protein]-L-lysine = [E2 ubiquitin-conjugating enzyme]-L-cysteine + N(6)-ubiquitinyl-[acceptor protein]-L-lysine.. Functionally, E3 ubiquitin-protein ligase which promotes ubiquitination and subsequent degradation of host MHC-I and CD4 molecules, presumably to prevent lysis of infected cells by cytotoxic T-lymphocytes and NK cell. Binds target molecules through transmembrane interaction. The result of this ubiquitination is the enhancement of the endocytosis of the target chain and the delivery to the lysosome, where it is proteolytically destroyed. The polypeptide is E3 ubiquitin-protein ligase LAP (Oryctolagus cuniculus (Rabbit)).